The primary structure comprises 464 residues: Plant intracellular Ras-group-related LRR protein 3 (464 aa).

Residues 106-138 adopt a coiled-coil conformation; the sequence is AAVVSLEEVHEGYEKQLRDLEEEIGRVYASAVE. LRR repeat units lie at residues 160–183, 184–206, 207–230, 232–252, 254–275, 276–299, 301–322, 323–347, 348–370, and 372–393; these read GGVVERIDLSDHELKLLPDALGKI, VGLVSLNVSRNNLRFLPDTISGL, EKLEELDLSSNRLVFLPDSIGLLL, LRILNVTGNKLTLLPESIAQC, SLVELDASFNNLTSLPANFGYG, LLNLERLSIQLNKIRFFPNSICEM, SLRYLDAHMNEIHGLPIAIGRL, TNLEVMNLSSNFSDLIELPDTISDL, ANLRELDLSNNQIRVLPDSFFRL, and KLEKLNLDQNPLEYPPQEMVNQ. The short motif at 398-406 is the GVYW; degenerate element; sequence VREFMRKRW.

The protein belongs to the SHOC2 family. Widely expressed.

Leucine-rich repeat protein that likely mediates protein interactions, possibly in the context of signal transduction. In Arabidopsis thaliana (Mouse-ear cress), this protein is Plant intracellular Ras-group-related LRR protein 3 (PIRL3).